The primary structure comprises 277 residues: Diaminopimelate epimerase (277 aa).

Positions 15 and 74 each coordinate substrate. Cysteine 83 acts as the Proton donor in catalysis. Substrate is bound by residues glycine 84–asparagine 85, asparagine 159, asparagine 194, and glutamate 212–arginine 213. Cysteine 221 acts as the Proton acceptor in catalysis. Position 222–223 (glycine 222–threonine 223) interacts with substrate.

The protein belongs to the diaminopimelate epimerase family. As to quaternary structure, homodimer.

Its subcellular location is the cytoplasm. It carries out the reaction (2S,6S)-2,6-diaminopimelate = meso-2,6-diaminopimelate. It participates in amino-acid biosynthesis; L-lysine biosynthesis via DAP pathway; DL-2,6-diaminopimelate from LL-2,6-diaminopimelate: step 1/1. Catalyzes the stereoinversion of LL-2,6-diaminopimelate (L,L-DAP) to meso-diaminopimelate (meso-DAP), a precursor of L-lysine and an essential component of the bacterial peptidoglycan. Involved in the succinylase branch of the diaminopimelate biosynthesis. This Corynebacterium glutamicum (strain ATCC 13032 / DSM 20300 / JCM 1318 / BCRC 11384 / CCUG 27702 / LMG 3730 / NBRC 12168 / NCIMB 10025 / NRRL B-2784 / 534) protein is Diaminopimelate epimerase.